A 235-amino-acid chain; its full sequence is Large ribosomal subunit protein uL1 (235 aa).

It belongs to the universal ribosomal protein uL1 family. As to quaternary structure, part of the 50S ribosomal subunit.

Its function is as follows. Binds directly to 23S rRNA. The L1 stalk is quite mobile in the ribosome, and is involved in E site tRNA release. Functionally, protein L1 is also a translational repressor protein, it controls the translation of the L11 operon by binding to its mRNA. This Symbiobacterium thermophilum (strain DSM 24528 / JCM 14929 / IAM 14863 / T) protein is Large ribosomal subunit protein uL1.